The following is a 170-amino-acid chain: Large ribosomal subunit protein uL5 (170 aa).

Belongs to the universal ribosomal protein uL5 family. In terms of assembly, part of the 50S ribosomal subunit; contacts the 5S rRNA and probably tRNA. Forms a bridge to the 30S subunit in the 70S ribosome.

Its function is as follows. This is one of the proteins that bind and probably mediate the attachment of the 5S RNA into the large ribosomal subunit, where it forms part of the central protuberance. In the 70S ribosome it contacts protein S13 of the 30S subunit (bridge B1b), connecting the 2 subunits; this bridge is implicated in subunit movement. May contact the P site tRNA; the 5S rRNA and some of its associated proteins might help stabilize positioning of ribosome-bound tRNAs. The sequence is that of Large ribosomal subunit protein uL5 from Methanobrevibacter smithii (strain ATCC 35061 / DSM 861 / OCM 144 / PS).